We begin with the raw amino-acid sequence, 135 residues long: UPF0355 protein SH2586 (135 aa).

The segment at 105–135 (NSSHDEVEENNSAYEEIDITHYANESKGPKS) is disordered.

Belongs to the UPF0355 family.

This is UPF0355 protein SH2586 from Staphylococcus haemolyticus (strain JCSC1435).